The following is a 77-amino-acid chain: Conodipine-M alpha chain (77 aa).

Glutamine 1 is subject to Pyrrolidone carboxylic acid. Histidine 36 is a catalytic residue.

Heterodimer of an alpha and a beta chains; probably disulfide-linked. The cofactor is Ca(2+). Expressed by the venom duct.

The protein resides in the secreted. It carries out the reaction a 1,2-diacyl-sn-glycero-3-phosphocholine + H2O = a 1-acyl-sn-glycero-3-phosphocholine + a fatty acid + H(+). Inhibited by linoleoyl amide and MG14. Heterodimer: conodipine-M catalyzes the calcium-dependent hydrolysis of the 2-acyl groups in 3-sn-phosphoglycerides. This activity may be supported by the alpha chain. Conodipine-M inhibits the binding of isradipine (a ligand specific for L-type calcium channel) to L-type calcium channels. This is Conodipine-M alpha chain from Conus magus (Magical cone).